The sequence spans 378 residues: Putative glutamate--cysteine ligase 2 (378 aa).

Belongs to the glutamate--cysteine ligase type 2 family. YbdK subfamily.

It carries out the reaction L-cysteine + L-glutamate + ATP = gamma-L-glutamyl-L-cysteine + ADP + phosphate + H(+). In terms of biological role, ATP-dependent carboxylate-amine ligase which exhibits weak glutamate--cysteine ligase activity. The sequence is that of Putative glutamate--cysteine ligase 2 from Leifsonia xyli subsp. xyli (strain CTCB07).